The primary structure comprises 129 residues: uncharacterized protein (129 aa).

This is an uncharacterized protein from Mycoplasma pneumoniae (strain ATCC 29342 / M129 / Subtype 1) (Mycoplasmoides pneumoniae).